We begin with the raw amino-acid sequence, 414 residues long: MIOREX complex component 10 (414 aa).

The N-terminal 29 residues, 1 to 29, are a transit peptide targeting the mitochondrion; that stretch reads MLSFRSLTSTFGFVSRFQIRRLGTSLSIQ. Residues 30 to 373 lie on the Mitochondrial matrix side of the membrane; that stretch reads NLEVQDGRWK…ISLLNERNST (344 aa). Residues 374 to 394 traverse the membrane as a helical segment; it reads FLEWIIIYLIAFELCFEIYHF. At 395–414 the chain is on the mitochondrial intermembrane side; sequence YQKYSSYCSEPTNDDLDATK.

It belongs to the RMD1/sif2 family. Associates with the mitochondrial ribosome.

Its subcellular location is the mitochondrion inner membrane. In terms of biological role, component of MIOREX complexes, large expressome-like assemblies of ribosomes with factors involved in all the steps of post-transcriptional gene expression. In Saccharomyces cerevisiae (strain ATCC 204508 / S288c) (Baker's yeast), this protein is MIOREX complex component 10.